The sequence spans 503 residues: Cytochrome P450 3A25 (503 aa).

Heme is bound at residue cysteine 442.

The protein belongs to the cytochrome P450 family. Requires heme as cofactor.

It localises to the endoplasmic reticulum membrane. The protein localises to the microsome membrane. The catalysed reaction is an organic molecule + reduced [NADPH--hemoprotein reductase] + O2 = an alcohol + oxidized [NADPH--hemoprotein reductase] + H2O + H(+). In terms of biological role, cytochromes P450 are a group of heme-thiolate monooxygenases. In liver microsomes, this enzyme is involved in an NADPH-dependent electron transport pathway. It oxidizes a variety of structurally unrelated compounds, including steroids, fatty acids, and xenobiotics. The protein is Cytochrome P450 3A25 (Cyp3a25) of Mus musculus (Mouse).